An 88-amino-acid chain; its full sequence is UPF0250 protein SO_1163 (88 aa).

The protein belongs to the UPF0250 family.

In Shewanella oneidensis (strain ATCC 700550 / JCM 31522 / CIP 106686 / LMG 19005 / NCIMB 14063 / MR-1), this protein is UPF0250 protein SO_1163.